The following is a 738-amino-acid chain: Phosphoribosylformylglycinamidine synthase subunit PurL (738 aa).

Residue His-53 is part of the active site. Positions 56 and 95 each coordinate ATP. Glu-97 lines the Mg(2+) pocket. Residues 98 to 101 and Arg-120 contribute to the substrate site; that span reads SHNH. His-99 serves as the catalytic Proton acceptor. Asp-121 is a binding site for Mg(2+). Gln-244 lines the substrate pocket. Position 274 (Asp-274) interacts with Mg(2+). 318–320 is a substrate binding site; that stretch reads ESQ. Positions 499 and 536 each coordinate ATP. Residue Asn-537 coordinates Mg(2+). Ser-539 is a binding site for substrate.

It belongs to the FGAMS family. In terms of assembly, monomer. Part of the FGAM synthase complex composed of 1 PurL, 1 PurQ and 2 PurS subunits.

It is found in the cytoplasm. It catalyses the reaction N(2)-formyl-N(1)-(5-phospho-beta-D-ribosyl)glycinamide + L-glutamine + ATP + H2O = 2-formamido-N(1)-(5-O-phospho-beta-D-ribosyl)acetamidine + L-glutamate + ADP + phosphate + H(+). It participates in purine metabolism; IMP biosynthesis via de novo pathway; 5-amino-1-(5-phospho-D-ribosyl)imidazole from N(2)-formyl-N(1)-(5-phospho-D-ribosyl)glycinamide: step 1/2. Part of the phosphoribosylformylglycinamidine synthase complex involved in the purines biosynthetic pathway. Catalyzes the ATP-dependent conversion of formylglycinamide ribonucleotide (FGAR) and glutamine to yield formylglycinamidine ribonucleotide (FGAM) and glutamate. The FGAM synthase complex is composed of three subunits. PurQ produces an ammonia molecule by converting glutamine to glutamate. PurL transfers the ammonia molecule to FGAR to form FGAM in an ATP-dependent manner. PurS interacts with PurQ and PurL and is thought to assist in the transfer of the ammonia molecule from PurQ to PurL. In Lacticaseibacillus paracasei (strain ATCC 334 / BCRC 17002 / CCUG 31169 / CIP 107868 / KCTC 3260 / NRRL B-441) (Lactobacillus paracasei), this protein is Phosphoribosylformylglycinamidine synthase subunit PurL.